Consider the following 276-residue polypeptide: MEEQPLCNLSVKDLMEAGAHFGHQTRRWNPKMKLYIFEEKNGLYIINLAKTLYQLRKALPQVCKVIKENKPILFVGTKKQAKCVIKEAAIEAGEYFVAERWLGGMLTNMTTIRNSIKTLDKIEKDLTQNSSYLTKKEIALLAKRHQKLLKNLEGIRYLKKAPGLVIVVDPSYEKIAVAEAKKLGIPVLALVDTNCDPTPIDYVIPCNDDSLKSIRLIISTIKDSIIDTKKKLGVEIVSPIKTLDIQDSEDMDVYATDEDNRQEDLLAKKYDSNEAN.

This sequence belongs to the universal ribosomal protein uS2 family.

The protein is Small ribosomal subunit protein uS2 of Chlamydia abortus (strain DSM 27085 / S26/3) (Chlamydophila abortus).